Reading from the N-terminus, the 246-residue chain is UDP-N-acetyl-D-mannosaminuronic acid transferase (246 aa).

The protein belongs to the glycosyltransferase 26 family.

It catalyses the reaction UDP-N-acetyl-alpha-D-mannosaminouronate + N-acetyl-alpha-D-glucosaminyl-di-trans,octa-cis-undecaprenyl diphosphate = beta-D-ManNAcA-(1-&gt;4)-alpha-D-GlcNAc-di-trans,octa-cis-undecaprenyl diphosphate + UDP + H(+). It functions in the pathway bacterial outer membrane biogenesis; enterobacterial common antigen biosynthesis. In terms of biological role, catalyzes the synthesis of Und-PP-GlcNAc-ManNAcA (Lipid II), the second lipid-linked intermediate involved in enterobacterial common antigen (ECA) synthesis. The chain is UDP-N-acetyl-D-mannosaminuronic acid transferase from Escherichia coli (strain 55989 / EAEC).